We begin with the raw amino-acid sequence, 656 residues long: MLTLRERQINAIKQMLNLNSQQPKAMAADAVWKILIYDRVGQDIISPIISIKELRELGVTLHVQLHSDRDSIPDVPAVYFCLPTDENLDRIQQDFSNGLYDIYHLNFLAPITRSKIENLAAAALHAGCVANIHRVYDQYVNFISLEDDFFILKHQQSDQLSYYAINRANTRDEEMEALMDSIVDSLFALFVTLGNVPIIRCPRNSAAEMVARKLEKKLRENLWDARANLFHMDATQAGGGVFSFQRPVLLLLDRNMDLATPLHHTWSYQALVHDVLDLGLNLVYVEDEGARKKPKACDLDRNDRFWVTHKGSPFPTVAEAIQEELESYRNSEEEIKRLKTSMGIEGESDIAFSLVNDTTAMLTSAVNSLPQLMEKKRLIDMHTKIATAILNCIKARRLDSYFEIEEKIMSKQTLDKPLLELLRDAEFGQPEDKLRLYIIYYICAQQLPEPELERLREALQSAGCDLTALAYVQRWKSIMNRSPSISQATQYEGGGTRTVSMFTKLVSQGSSFVMEGVKNLVVKRHVNINLRLGSDRVKAKLIPNFLENLPVTKITEQVMECRSNAETDDYLYLAPKLLKGGDVLPKNRAPFQDAVVFMVGGGNYIEYQNLVDFIKQKQTSNVHRRIIYGGSTLTNARQFLKELSALGGEIQTPTAS.

Tandem repeats lie at residues 85–121, 203–245, 419–456, and 460–496. The 4 X approximate repeats stretch occupies residues 85–496; the sequence is DENLDRIQQD…QATQYEGGGT (412 aa).

This sequence belongs to the STXBP/unc-18/SEC1 family.

Its subcellular location is the cytoplasm. The protein localises to the membrane. Non-vital for development. The polypeptide is Protein sly1 homolog (Slh) (Drosophila virilis (Fruit fly)).